Consider the following 795-residue polypeptide: RINT1-like protein MAG2 (795 aa).

A coiled-coil region spans residues 35–64 (TGLVSELQTEISELDQRLAGLNRQLESGLA). A disordered region spans residues 91–111 (TSVTRSASDSGKEEEATEHVA). A compositionally biased stretch (basic and acidic residues) spans 100–111 (SGKEEEATEHVA). The 589-residue stretch at 207-795 (ALAMMRPQAI…KKVAKSRVFS (589 aa)) folds into the RINT1/TIP20 domain.

It belongs to the RINT1 family. Interacts with SEC20 and SYP81. Interacts with ZW10 (via the central region). Forms a complex with ZW10/MIP1, MIP2 and MIP3 on the endoplasmic reticulum. Highly expressed in dry seeds. Expressed at low levels in roots, rosette and cauline leaves, stems and flowers.

Its subcellular location is the endoplasmic reticulum membrane. Functions in the anterograde transport of storage protein precursors from the endoplasmic reticulum (ER) to the Golgi complex and in the retrograde transport from the Golgi complex to the ER. Forms a complex with ZW10/MIP1, MIP2 and MIP3 on the ER that may be responsible for efficient transport of seed storage proteins. Required for the responses to environmental stresses during seed germination and vegetative growth. Probably not involved in the retrograde transport from the ER to the apoplast. This Arabidopsis thaliana (Mouse-ear cress) protein is RINT1-like protein MAG2.